A 312-amino-acid polypeptide reads, in one-letter code: Heme oxygenase 2 (312 aa).

Ser-2 carries the N-acetylserine modification. Phosphoserine is present on Ser-2. His-41 is a binding site for heme b. HRM repeat units lie at residues 260–265 and 277–282; these read KCPYYA and SCPFRA. S-nitrosocysteine is present on residues Cys-261 and Cys-278.

It belongs to the heme oxygenase family. S-nitrosylated by BLVRB.

The protein resides in the microsome. The protein localises to the endoplasmic reticulum. It carries out the reaction heme b + 3 reduced [NADPH--hemoprotein reductase] + 3 O2 = biliverdin IXalpha + CO + Fe(2+) + 3 oxidized [NADPH--hemoprotein reductase] + 3 H2O + H(+). In terms of biological role, heme oxygenase cleaves the heme ring at the alpha methene bridge to form biliverdin. Biliverdin is subsequently converted to bilirubin by biliverdin reductase. Under physiological conditions, the activity of heme oxygenase is highest in the spleen, where senescent erythrocytes are sequestrated and destroyed. Heme oxygenase 2 could be implicated in the production of carbon monoxide in brain where it could act as a neurotransmitter. The sequence is that of Heme oxygenase 2 (HMOX2) from Oryctolagus cuniculus (Rabbit).